The primary structure comprises 385 residues: Methionine aminopeptidase 1 (385 aa).

The C6H2-type zinc finger occupies Ser-6–Lys-59. 8 residues coordinate Zn(2+): Cys-9, Cys-14, Cys-22, Cys-25, Cys-36, Cys-40, His-48, and His-52. Residue His-203 coordinates a protein. Residues Asp-220, Asp-231, and His-294 each coordinate Zn(2+). His-301 serves as a coordination point for a protein. Glu-327 and Glu-358 together coordinate Zn(2+).

It belongs to the peptidase M24A family. Methionine aminopeptidase type 1 subfamily. In terms of assembly, associates with the 60S ribosomal subunit of the 80S translational complex. Zn(2+) serves as cofactor. Co(2+) is required as a cofactor. Requires Mn(2+) as cofactor. It depends on Fe(2+) as a cofactor.

It localises to the cytoplasm. The enzyme catalyses Release of N-terminal amino acids, preferentially methionine, from peptides and arylamides.. Its function is as follows. Cotranslationally removes the N-terminal methionine from nascent proteins. The N-terminal methionine is often cleaved when the second residue in the primary sequence is small and uncharged (Met-Ala-, Cys, Gly, Pro, Ser, Thr, or Val). The sequence is that of Methionine aminopeptidase 1 (metap1) from Xenopus laevis (African clawed frog).